The chain runs to 440 residues: 3-phosphoshikimate 1-carboxyvinyltransferase (440 aa).

Positions 19, 20, and 24 each coordinate 3-phosphoshikimate. Lys19 lines the phosphoenolpyruvate pocket. Phosphoenolpyruvate contacts are provided by Gly92 and Arg121. Positions 166, 168, 315, and 342 each coordinate 3-phosphoshikimate. Gln168 contacts phosphoenolpyruvate. The Proton acceptor role is filled by Asp315. Residues Arg346 and Arg399 each coordinate phosphoenolpyruvate.

Belongs to the EPSP synthase family. In terms of assembly, monomer.

The protein localises to the cytoplasm. The catalysed reaction is 3-phosphoshikimate + phosphoenolpyruvate = 5-O-(1-carboxyvinyl)-3-phosphoshikimate + phosphate. The protein operates within metabolic intermediate biosynthesis; chorismate biosynthesis; chorismate from D-erythrose 4-phosphate and phosphoenolpyruvate: step 6/7. Its function is as follows. Catalyzes the transfer of the enolpyruvyl moiety of phosphoenolpyruvate (PEP) to the 5-hydroxyl of shikimate-3-phosphate (S3P) to produce enolpyruvyl shikimate-3-phosphate and inorganic phosphate. The protein is 3-phosphoshikimate 1-carboxyvinyltransferase of Leptospira borgpetersenii serovar Hardjo-bovis (strain JB197).